We begin with the raw amino-acid sequence, 171 residues long: NADH-quinone oxidoreductase subunit I 1 (171 aa).

4Fe-4S ferredoxin-type domains are found at residues 39 to 71 and 81 to 110; these read IVLT…LSKA and EHFR…LTPD. The [4Fe-4S] cluster site is built by Cys-51, Cys-54, Cys-57, Cys-61, Cys-90, Cys-93, Cys-96, and Cys-100.

This sequence belongs to the complex I 23 kDa subunit family. In terms of assembly, NDH-1 is composed of 14 different subunits. Subunits NuoA, H, J, K, L, M, N constitute the membrane sector of the complex. [4Fe-4S] cluster is required as a cofactor.

It localises to the cell inner membrane. The catalysed reaction is a quinone + NADH + 5 H(+)(in) = a quinol + NAD(+) + 4 H(+)(out). NDH-1 shuttles electrons from NADH, via FMN and iron-sulfur (Fe-S) centers, to quinones in the respiratory chain. The immediate electron acceptor for the enzyme in this species is believed to be ubiquinone. Couples the redox reaction to proton translocation (for every two electrons transferred, four hydrogen ions are translocated across the cytoplasmic membrane), and thus conserves the redox energy in a proton gradient. In Rhodopseudomonas palustris (strain HaA2), this protein is NADH-quinone oxidoreductase subunit I 1.